The chain runs to 187 residues: Peptidyl-tRNA hydrolase (187 aa).

His-14 lines the tRNA pocket. The active-site Proton acceptor is the His-19. TRNA-binding residues include Tyr-62, Asn-64, and Asn-110.

The protein belongs to the PTH family. In terms of assembly, monomer.

It localises to the cytoplasm. It carries out the reaction an N-acyl-L-alpha-aminoacyl-tRNA + H2O = an N-acyl-L-amino acid + a tRNA + H(+). In terms of biological role, hydrolyzes ribosome-free peptidyl-tRNAs (with 1 or more amino acids incorporated), which drop off the ribosome during protein synthesis, or as a result of ribosome stalling. Catalyzes the release of premature peptidyl moieties from peptidyl-tRNA molecules trapped in stalled 50S ribosomal subunits, and thus maintains levels of free tRNAs and 50S ribosomes. This Chlorobaculum tepidum (strain ATCC 49652 / DSM 12025 / NBRC 103806 / TLS) (Chlorobium tepidum) protein is Peptidyl-tRNA hydrolase.